A 536-amino-acid chain; its full sequence is Apolipoprotein N-acyltransferase (536 aa).

7 consecutive transmembrane segments (helical) span residues 10–30, 42–62, 76–96, 107–127, 136–158, 181–201, and 212–232; these read IASGIILAWGWKRAVIALLAG, AWPVLFITFPIAVWLIDGSAA, WWFGFGYFVPGLYWIGYAFLV, AAICGLPAYLALFTALGFALA, LRILSLAVSLTISEWLRGHLLTG, IGIWGLTLLTVAIFASPAVLI, and AVPAMALGVLAAMTVFGGIRL. Positions 248-501 constitute a CN hydrolase domain; sequence MQPNLPQDAR…EGVLDSGLPA (254 aa). The Proton acceptor role is filled by E295. K360 is an active-site residue. The active-site Nucleophile is C413. The helical transmembrane segment at 509–529 threads the bilayer; it reads ARVGELPAAVLVALVMMLVLL.

This sequence belongs to the CN hydrolase family. Apolipoprotein N-acyltransferase subfamily.

It is found in the cell inner membrane. It catalyses the reaction N-terminal S-1,2-diacyl-sn-glyceryl-L-cysteinyl-[lipoprotein] + a glycerophospholipid = N-acyl-S-1,2-diacyl-sn-glyceryl-L-cysteinyl-[lipoprotein] + a 2-acyl-sn-glycero-3-phospholipid + H(+). It participates in protein modification; lipoprotein biosynthesis (N-acyl transfer). Catalyzes the phospholipid dependent N-acylation of the N-terminal cysteine of apolipoprotein, the last step in lipoprotein maturation. The sequence is that of Apolipoprotein N-acyltransferase from Rhodopseudomonas palustris (strain ATCC BAA-98 / CGA009).